Consider the following 136-residue polypeptide: MASSGDSSGKQRSDEEWRAVLSPEQFRILRLKGTELPGTGEYNKFYGDGVYNCAGCGTPLYKSTTKFDSGCGWPAFFEGLPGAINRTPDPDGRRVEITCAACGGHLGHVFKGEGFKTPTDERHCVNSVSIKFTPAS.

In terms of domain architecture, MsrB spans 14–135 (DEEWRAVLSP…NSVSIKFTPA (122 aa)). Zn(2+) contacts are provided by cysteine 53, cysteine 56, cysteine 99, and cysteine 102. Cysteine 71 and cysteine 124 form a disulfide bridge. Cysteine 124 acts as the Nucleophile in catalysis.

The protein belongs to the MsrB Met sulfoxide reductase family. Requires Zn(2+) as cofactor.

It is found in the cytoplasm. The protein localises to the cytosol. It catalyses the reaction L-methionyl-[protein] + [thioredoxin]-disulfide + H2O = L-methionyl-(R)-S-oxide-[protein] + [thioredoxin]-dithiol. Its function is as follows. Catalyzes the reduction of methionine sulfoxide (MetSO) to methionine in proteins. Plays a protective role against oxidative stress by restoring activity to proteins that have been inactivated by methionine oxidation. MSRB family specifically reduces the MetSO R-enantiomer. The sequence is that of Peptide methionine sulfoxide reductase B5 (MSRB5) from Oryza sativa subsp. japonica (Rice).